The following is a 553-amino-acid chain: Putative transport protein KPN78578_40470 (553 aa).

5 consecutive transmembrane segments (helical) span residues Ile4 to Val24, Gly28 to Asp48, Phe65 to Ser85, Leu95 to Phe115, and Met158 to Val178. RCK C-terminal domains follow at residues Arg192–Gln276 and Ala279–Asn361. 6 consecutive transmembrane segments (helical) span residues Met371–Ile391, Ala403–Phe425, Leu437–Thr457, Leu464–Leu484, Tyr493–Ala513, and Pro532–Leu552.

The protein belongs to the AAE transporter (TC 2.A.81) family. YidE subfamily.

Its subcellular location is the cell membrane. The sequence is that of Putative transport protein KPN78578_40470 from Klebsiella pneumoniae subsp. pneumoniae (strain ATCC 700721 / MGH 78578).